The sequence spans 679 residues: Protein FAM178B (679 aa).

The tract at residues 70–113 is disordered; the sequence is PLDQGPRCPARRPCSPASAPAPTSPKKPKIQAPGETFPTDWSPP. Residues 75 to 90 are compositionally biased toward low complexity; the sequence is PRCPARRPCSPASAPA.

This sequence belongs to the FAM178 family.

The sequence is that of Protein FAM178B from Homo sapiens (Human).